Consider the following 432-residue polypeptide: Glutamyl-tRNA reductase (432 aa).

Residues 55–58 (TCNR), Ser114, 119–121 (ETQ), and Gln125 each bind substrate. The active-site Nucleophile is the Cys56. An NADP(+)-binding site is contributed by 194–199 (GAGEMI).

It belongs to the glutamyl-tRNA reductase family. As to quaternary structure, homodimer.

It catalyses the reaction (S)-4-amino-5-oxopentanoate + tRNA(Glu) + NADP(+) = L-glutamyl-tRNA(Glu) + NADPH + H(+). It functions in the pathway porphyrin-containing compound metabolism; protoporphyrin-IX biosynthesis; 5-aminolevulinate from L-glutamyl-tRNA(Glu): step 1/2. Its function is as follows. Catalyzes the NADPH-dependent reduction of glutamyl-tRNA(Glu) to glutamate 1-semialdehyde (GSA). In Burkholderia ambifaria (strain ATCC BAA-244 / DSM 16087 / CCUG 44356 / LMG 19182 / AMMD) (Burkholderia cepacia (strain AMMD)), this protein is Glutamyl-tRNA reductase.